We begin with the raw amino-acid sequence, 138 residues long: Ribonuclease kappa-A (138 aa).

The N-terminal stretch at 1–24 (MVLYFSPVLTFFLANFFNSKSTTT) is a signal peptide. Topologically, residues 25–75 (ENLQVFLVENQHRDSKRKINPTFSKKGIEVRQQNENLWSKIVALRFDYSVW) are extracellular. The chain crosses the membrane as a helical span at residues 76-96 (GIIQLVLMMGLFFYINSVALI). Residues 97-138 (EDLPIDEEFNSVEEFYTAATSAYNQNAYTVGLPVHLCAYASI) are Cytoplasmic-facing.

Belongs to the RNase K family.

It is found in the membrane. In terms of biological role, endoribonuclease. The polypeptide is Ribonuclease kappa-A (Ceratitis capitata (Mediterranean fruit fly)).